A 208-amino-acid chain; its full sequence is Large ribosomal subunit protein uL3 (208 aa).

Residues 117–147 (FQGVIKRHGQSRGPMAHGSRYHRRPGSMGPV) form a disordered region.

The protein belongs to the universal ribosomal protein uL3 family. Part of the 50S ribosomal subunit. Forms a cluster with proteins L14 and L19.

Functionally, one of the primary rRNA binding proteins, it binds directly near the 3'-end of the 23S rRNA, where it nucleates assembly of the 50S subunit. This Streptococcus equi subsp. zooepidemicus (strain H70) protein is Large ribosomal subunit protein uL3.